The primary structure comprises 413 residues: 2,3-diketo-5-methylthiopentyl-1-phosphate enolase (413 aa).

Lys98 acts as the Proton acceptor in catalysis. Substrate is bound by residues Lys147, 173–176 (KDDE), His264, Gly337, and 359–360 (GG). Mg(2+) contacts are provided by Lys173, Asp175, and Glu176. Position 173 is an N6-carboxylysine (Lys173).

The protein belongs to the RuBisCO large chain family. Type IV subfamily. As to quaternary structure, homodimer. The cofactor is Mg(2+).

The enzyme catalyses 5-methylsulfanyl-2,3-dioxopentyl phosphate = 2-hydroxy-5-methylsulfanyl-3-oxopent-1-enyl phosphate. The protein operates within amino-acid biosynthesis; L-methionine biosynthesis via salvage pathway; L-methionine from S-methyl-5-thio-alpha-D-ribose 1-phosphate: step 3/6. In terms of biological role, catalyzes the enolization of 2,3-diketo-5-methylthiopentyl-1-phosphate (DK-MTP-1-P) into 2-hydroxy-3-keto-5-methylthiopentenyl-1-phosphate (HK-MTPenyl-1-P). In Geobacillus kaustophilus (strain HTA426), this protein is 2,3-diketo-5-methylthiopentyl-1-phosphate enolase (mtnW).